A 206-amino-acid polypeptide reads, in one-letter code: Tektin bundle-interacting protein 1 (206 aa).

In terms of assembly, microtubule inner protein component of sperm flagellar doublet microtubules.

It is found in the cytoplasm. The protein localises to the cytoskeleton. The protein resides in the cilium axoneme. Its subcellular location is the flagellum axoneme. Microtubule inner protein (MIP) part of the dynein-decorated doublet microtubules (DMTs) in cilia axoneme, which is required for motile cilia beating. Located at the center of the tektin bundle where may function to recruit tektins or stabilize the bundle. In Mus musculus (Mouse), this protein is Tektin bundle-interacting protein 1.